Reading from the N-terminus, the 213-residue chain is Nicolin-1 (213 aa).

In terms of assembly, part of the neuronal tubulin polyglutamylase complex which contains TPGS1, TPGS2, TTLL1, LRRC49 and NICN1. As to expression, high expression level is found in brain, testis, liver and kidney. Weak expression in spleen, leukocytes, small intestin and colon.

The protein resides in the nucleus. In Mus musculus (Mouse), this protein is Nicolin-1 (Nicn1).